The chain runs to 241 residues: tRNA pseudouridine synthase A (241 aa).

Asp-51 (nucleophile) is an active-site residue. Tyr-110 is a binding site for substrate.

The protein belongs to the tRNA pseudouridine synthase TruA family. Homodimer.

It carries out the reaction uridine(38/39/40) in tRNA = pseudouridine(38/39/40) in tRNA. Its function is as follows. Formation of pseudouridine at positions 38, 39 and 40 in the anticodon stem and loop of transfer RNAs. In Campylobacter jejuni subsp. jejuni serotype O:2 (strain ATCC 700819 / NCTC 11168), this protein is tRNA pseudouridine synthase A.